The following is a 307-amino-acid chain: Homoserine kinase (307 aa).

86–96 (PIARGLGSSAA) contributes to the ATP binding site.

The protein belongs to the GHMP kinase family. Homoserine kinase subfamily.

Its subcellular location is the cytoplasm. It carries out the reaction L-homoserine + ATP = O-phospho-L-homoserine + ADP + H(+). Its pathway is amino-acid biosynthesis; L-threonine biosynthesis; L-threonine from L-aspartate: step 4/5. In terms of biological role, catalyzes the ATP-dependent phosphorylation of L-homoserine to L-homoserine phosphate. This Petrotoga mobilis (strain DSM 10674 / SJ95) protein is Homoserine kinase.